A 1055-amino-acid chain; its full sequence is Elongation factor 3 (1055 aa).

Valine 45 lines the ADP pocket. HEAT repeat units follow at residues valine 45–alanine 86, serine 96–proline 133, alanine 135–tyrosine 172, glycine 175–asparagine 213, glutamate 217–isoleucine 255, leucine 257–serine 290, and arginine 295–glutamate 337. 2 consecutive ABC transporter domains span residues cysteine 447–glutamine 659 and leucine 687–glycine 1004. 4 residues coordinate ADP: asparagine 723, glutamate 933, asparagine 936, and histidine 962. 2 disordered regions span residues histidine 987–aspartate 1006 and glutamate 1024–leucine 1055. Positions arginine 1033–lysine 1044 are enriched in basic residues.

This sequence belongs to the ABC transporter superfamily. ABCF family. EF3 subfamily. In terms of assembly, associates with ribosomes.

The protein resides in the cytoplasm. It localises to the cytosol. It catalyses the reaction ATP + H2O = ADP + phosphate + H(+). It participates in protein biosynthesis; polypeptide chain elongation. Ribosome-dependent ATPase that functions in cytoplasmic translation elongation. Required for the ATP-dependent release of deacylated tRNA from the ribosomal E-site during protein biosynthesis. Stimulates the eEF1A-dependent binding of aminoacyl-tRNA to the ribosomal A-site, which has reduced affinity for tRNA as long as the E-site is occupied. Assists translation termination by stimulating the release of nascent protein from the ribosome by release factors. Appears to target calcium-channel protein CCH1 to the plasma membrane. In Cryptococcus neoformans var. neoformans serotype D (strain JEC21 / ATCC MYA-565) (Filobasidiella neoformans), this protein is Elongation factor 3.